We begin with the raw amino-acid sequence, 256 residues long: VLCVQGSCPLLVVEQIGQRPLWAQSLELPGPAMQPLPTGAFPEEVTEETPVQSENEPKVLDPEGDLLCIAKTFSYLRESGWYWGSITASEARQHLQKMPEGTFLVRDSTHPSYLFTLSVKTTRGPTNVRIEYADSSFRLDSNCLSRPRILAFPDVVSLVQHYVASCTADTRSDSPDPAPTPALPVSKPDAPGDPVLPIPVATAVHLKLVQPFVRRSSARSLQHLCRLVINRLVTDVDCLPLPRRMADYLRQYPFQL.

The region spanning 81–162 is the SH2 domain; it reads WYWGSITASE…PDVVSLVQHY (82 aa). A disordered region spans residues 168 to 190; that stretch reads ADTRSDSPDPAPTPALPVSKPDA. The SOCS box domain occupies 207 to 255; sequence KLVQPFVRRSSARSLQHLCRLVINRLVTDVDCLPLPRRMADYLRQYPFQ.

In terms of assembly, stably associated with the tyrosine-phosphorylated IL3 receptor beta chain and tyrosine-phosphorylated EPO receptor (EPOR).

It functions in the pathway protein modification; protein ubiquitination. Functionally, SOCS family proteins form part of a classical negative feedback system that regulates cytokine signal transduction. CIS is involved in the negative regulation of cytokines that signal through the JAK-STAT5 pathway such as erythropoietin, prolactin and interleukin 3 (IL3) receptor. Inhibits STAT5 trans-activation by suppressing its tyrosine phosphorylation. May be a substrate recognition component of a SCF-like ECS (Elongin BC-CUL2/5-SOCS-box protein) E3 ubiquitin-protein ligase complex which mediates the ubiquitination and subsequent proteasomal degradation of target proteins. The polypeptide is Cytokine-inducible SH2-containing protein (Cish) (Rattus norvegicus (Rat)).